Here is a 392-residue protein sequence, read N- to C-terminus: Nicotinate phosphoribosyltransferase (392 aa).

His214 carries the phosphohistidine; by autocatalysis modification.

The protein belongs to the NAPRTase family. Post-translationally, transiently phosphorylated on a His residue during the reaction cycle. Phosphorylation strongly increases the affinity for substrates and increases the rate of nicotinate D-ribonucleotide production. Dephosphorylation regenerates the low-affinity form of the enzyme, leading to product release.

It catalyses the reaction nicotinate + 5-phospho-alpha-D-ribose 1-diphosphate + ATP + H2O = nicotinate beta-D-ribonucleotide + ADP + phosphate + diphosphate. It participates in cofactor biosynthesis; NAD(+) biosynthesis; nicotinate D-ribonucleotide from nicotinate: step 1/1. In terms of biological role, catalyzes the synthesis of beta-nicotinate D-ribonucleotide from nicotinate and 5-phospho-D-ribose 1-phosphate at the expense of ATP. In Xanthomonas euvesicatoria pv. vesicatoria (strain 85-10) (Xanthomonas campestris pv. vesicatoria), this protein is Nicotinate phosphoribosyltransferase.